Consider the following 600-residue polypeptide: NADH-quinone oxidoreductase subunit C/D (600 aa).

The segment at 1–190 (MVNNMTDLTA…SPFELTKAKQ (190 aa)) is NADH dehydrogenase I subunit C. The segment at 214–600 (DFMFLNLGPN…IDFVMSDVDR (387 aa)) is NADH dehydrogenase I subunit D.

This sequence in the N-terminal section; belongs to the complex I 30 kDa subunit family. It in the C-terminal section; belongs to the complex I 49 kDa subunit family. NDH-1 is composed of 13 different subunits. Subunits NuoB, CD, E, F, and G constitute the peripheral sector of the complex.

It localises to the cell inner membrane. The catalysed reaction is a quinone + NADH + 5 H(+)(in) = a quinol + NAD(+) + 4 H(+)(out). Functionally, NDH-1 shuttles electrons from NADH, via FMN and iron-sulfur (Fe-S) centers, to quinones in the respiratory chain. The immediate electron acceptor for the enzyme in this species is believed to be ubiquinone. Couples the redox reaction to proton translocation (for every two electrons transferred, four hydrogen ions are translocated across the cytoplasmic membrane), and thus conserves the redox energy in a proton gradient. The protein is NADH-quinone oxidoreductase subunit C/D of Escherichia coli O127:H6 (strain E2348/69 / EPEC).